Here is a 593-residue protein sequence, read N- to C-terminus: Thiol:disulfide interchange protein DsbD (593 aa).

The signal sequence occupies residues 1-21 (MRALLTFFVAGLLVLSSPAMA). Disulfide bonds link cysteine 130/cysteine 136 and cysteine 207/cysteine 328. 8 consecutive transmembrane segments (helical) span residues 193–215 (LLFL…YPIL), 235–257 (LVYV…SAGL), 269–291 (LIGL…TLQL), 318–340 (GAIS…LLYV), 347–369 (LTGG…LVAV), 384–401 (RVKT…IFLL), 408–425 (MWST…FGWL), and 440–462 (SAVG…NYWF). Residues 451 to 593 (FASAQPALNY…FLEHIQRISN (143 aa)) enclose the Thioredoxin domain. Cysteine 508 and cysteine 511 are oxidised to a cystine.

The protein belongs to the thioredoxin family. DsbD subfamily.

The protein localises to the cell inner membrane. It catalyses the reaction [protein]-dithiol + NAD(+) = [protein]-disulfide + NADH + H(+). It carries out the reaction [protein]-dithiol + NADP(+) = [protein]-disulfide + NADPH + H(+). Its function is as follows. Required to facilitate the formation of correct disulfide bonds in some periplasmic proteins and for the assembly of the periplasmic c-type cytochromes. Acts by transferring electrons from cytoplasmic thioredoxin to the periplasm. This transfer involves a cascade of disulfide bond formation and reduction steps. The polypeptide is Thiol:disulfide interchange protein DsbD (Vibrio vulnificus (strain CMCP6)).